An 85-amino-acid polypeptide reads, in one-letter code: U4-theraphotoxin-Hhn1a (85 aa).

An N-terminal signal peptide occupies residues 1 to 22; the sequence is MKMTLIAILTCAAVLVLHITAA. A propeptide spanning residues 23 to 48 is cleaved from the precursor; sequence EELEAESQLMEVGMPDTELEAVDEER. Cystine bridges form between Cys-52/Cys-66, Cys-56/Cys-77, and Cys-71/Cys-82.

The protein belongs to the neurotoxin 12 (Hwtx-2) family. 02 (Hwtx-2) subfamily. Monomer. As to expression, expressed by the venom gland.

It localises to the secreted. In terms of biological role, neurotoxin active on both insects and mammals. This is U4-theraphotoxin-Hhn1a from Cyriopagopus hainanus (Chinese bird spider).